The chain runs to 1338 residues: Centrosomal P4.1-associated protein (1338 aa).

The interval 190-211 (GLSLLPDDQSQKHRSPGNTTTG) is disordered. 2 positions are modified to phosphoserine: Ser-260 and Ser-316. Positions 319-394 (VANIEERPIK…FTNAKSKFQK (76 aa)) are alpha/beta-tubulin binding. Disordered stretches follow at residues 386–414 (TNAK…PLFK), 436–479 (PILK…QTGK), and 521–551 (QGKD…ESES). Over residues 400 to 409 (LVTNQSTSED) the composition is skewed to polar residues. Ser-540 bears the Phosphoserine mark. The segment covering 541–550 (PIRETMKESE) has biased composition (basic and acidic residues). Ser-589 is subject to Phosphoserine; by PLK2. Residue Ser-595 is modified to Phosphoserine; by PLK2 and PLK4. Disordered regions lie at residues 611 to 789 (HRMS…LSLS), 845 to 865 (VKRG…TSEL), and 1096 to 1153 (YLPM…QGEI). Residues 635-650 (NRSEDLDHTAREKESE) are compositionally biased toward basic and acidic residues. Positions 679–689 (QKSTSENQTEW) are enriched in polar residues. Residues 717-764 (STEDRERGISSREDSPQVCDDKGPFKDTRTQEDKRRDVDLDLSDKDYS) show a composition bias toward basic and acidic residues. A Phosphoserine modification is found at Ser-759. The tract at residues 895–1338 (QPPGDNARSQ…EGNVLMDTEL (444 aa)) is interaction with STIL. Residues 1140-1149 (YKEEEEDQDI) are compositionally biased toward acidic residues.

The protein belongs to the TCP10 family. In terms of assembly, forms homodimers. Associates with microtubules plus ends; binds to beta-tubulin subunits exposed on microtubule outer surface at its distal tip; also associates with microtubule lattice. Associated with the gamma-tubulin complex. Interacts with the head domain of EPB41. Interacts with LYST. Interacts with CEP152 (via C-terminus). Interacts with STIL. Forms a complex with STIL and SASS6. In terms of processing, phosphorylation at Ser-589 and Ser-595 by PLK2 is required for procentriole formation and centriole elongation. Phosphorylation by PLK2 oscillates during the cell cycle: it increases at G1/S transition and decreases during the exit from mitosis. Phosphorylation at Ser-595 is also mediated by PLK4 but is not a critical step in PLK4 function in procentriole assembly.

It localises to the cytoplasm. Its subcellular location is the cytoskeleton. The protein resides in the microtubule organizing center. The protein localises to the centrosome. It is found in the centriole. In terms of biological role, plays an important role in cell division and centrosome function by participating in centriole duplication. Inhibits microtubule nucleation from the centrosome. Involved in the regulation of slow processive growth of centriolar microtubules. Acts as a microtubule plus-end tracking protein that stabilizes centriolar microtubules and inhibits microtubule polymerization and extension from the distal ends of centrioles. Required for centriole elongation and for STIL-mediated centriole amplification. Required for the recruitment of CEP295 to the proximal end of new-born centrioles at the centriolar microtubule wall during early S phase in a PLK4-dependent manner. May be involved in the control of centriolar-microtubule growth by acting as a regulator of tubulin release. The sequence is that of Centrosomal P4.1-associated protein from Homo sapiens (Human).